Reading from the N-terminus, the 186-residue chain is Adenylate kinase (186 aa).

Glycine 10–threonine 15 is a binding site for ATP. The interval serine 30–valine 59 is NMP. AMP-binding positions include threonine 31, arginine 36, glutamate 57 to valine 59, glycine 85 to arginine 88, and glutamine 92. Residues lysine 126–aspartate 136 form an LID region. Arginine 127 is a binding site for ATP. Positions 133 and 144 each coordinate AMP. Glycine 172 lines the ATP pocket.

Belongs to the adenylate kinase family. In terms of assembly, monomer.

It is found in the cytoplasm. It catalyses the reaction AMP + ATP = 2 ADP. Its pathway is purine metabolism; AMP biosynthesis via salvage pathway; AMP from ADP: step 1/1. In terms of biological role, catalyzes the reversible transfer of the terminal phosphate group between ATP and AMP. Plays an important role in cellular energy homeostasis and in adenine nucleotide metabolism. This is Adenylate kinase from Bifidobacterium longum (strain NCC 2705).